A 202-amino-acid polypeptide reads, in one-letter code: Small ribosomal subunit protein uS4 (202 aa).

Residues 18–42 form a disordered region; that stretch reads LPGLTRKAAKRSYPPGQHGQARRKR. The S4 RNA-binding domain occupies 90–152; the sequence is NRLDNVCFRL…KPSKKLAETN (63 aa).

This sequence belongs to the universal ribosomal protein uS4 family. As to quaternary structure, part of the 30S ribosomal subunit. Contacts protein S5. The interaction surface between S4 and S5 is involved in control of translational fidelity.

In terms of biological role, one of the primary rRNA binding proteins, it binds directly to 16S rRNA where it nucleates assembly of the body of the 30S subunit. Functionally, with S5 and S12 plays an important role in translational accuracy. This Synechococcus sp. (strain RCC307) protein is Small ribosomal subunit protein uS4.